A 263-amino-acid polypeptide reads, in one-letter code: S-adenosylmethionine decarboxylase proenzyme (263 aa).

S113 functions as the Schiff-base intermediate with substrate; via pyruvic acid in the catalytic mechanism. Residue S113 is modified to Pyruvic acid (Ser); by autocatalysis. Residue H118 is the Proton acceptor; for processing activity of the active site. C141 acts as the Proton donor; for catalytic activity in catalysis.

This sequence belongs to the prokaryotic AdoMetDC family. Type 2 subfamily. As to quaternary structure, heterooctamer of four alpha and four beta chains arranged as a tetramer of alpha/beta heterodimers. The cofactor is pyruvate. Is synthesized initially as an inactive proenzyme. Formation of the active enzyme involves a self-maturation process in which the active site pyruvoyl group is generated from an internal serine residue via an autocatalytic post-translational modification. Two non-identical subunits are generated from the proenzyme in this reaction, and the pyruvate is formed at the N-terminus of the alpha chain, which is derived from the carboxyl end of the proenzyme. The post-translation cleavage follows an unusual pathway, termed non-hydrolytic serinolysis, in which the side chain hydroxyl group of the serine supplies its oxygen atom to form the C-terminus of the beta chain, while the remainder of the serine residue undergoes an oxidative deamination to produce ammonia and the pyruvoyl group blocking the N-terminus of the alpha chain.

It catalyses the reaction S-adenosyl-L-methionine + H(+) = S-adenosyl 3-(methylsulfanyl)propylamine + CO2. It participates in amine and polyamine biosynthesis; S-adenosylmethioninamine biosynthesis; S-adenosylmethioninamine from S-adenosyl-L-methionine: step 1/1. Functionally, catalyzes the decarboxylation of S-adenosylmethionine to S-adenosylmethioninamine (dcAdoMet), the propylamine donor required for the synthesis of the polyamines spermine and spermidine from the diamine putrescine. This Marinobacter nauticus (strain ATCC 700491 / DSM 11845 / VT8) (Marinobacter aquaeolei) protein is S-adenosylmethionine decarboxylase proenzyme.